Here is a 298-residue protein sequence, read N- to C-terminus: UDP-N-acetylenolpyruvoylglucosamine reductase (298 aa).

One can recognise an FAD-binding PCMH-type domain in the interval 26 to 191 (KTGGEAEYLA…LSATFSLKPG (166 aa)). The active site involves arginine 170. Serine 220 serves as the catalytic Proton donor. The active site involves glutamate 290.

Belongs to the MurB family. It depends on FAD as a cofactor.

It localises to the cytoplasm. The catalysed reaction is UDP-N-acetyl-alpha-D-muramate + NADP(+) = UDP-N-acetyl-3-O-(1-carboxyvinyl)-alpha-D-glucosamine + NADPH + H(+). It functions in the pathway cell wall biogenesis; peptidoglycan biosynthesis. Its function is as follows. Cell wall formation. The chain is UDP-N-acetylenolpyruvoylglucosamine reductase from Lactobacillus acidophilus (strain ATCC 700396 / NCK56 / N2 / NCFM).